The sequence spans 566 residues: Urease subunit alpha (566 aa).

The Urease domain maps to 129–566 (GGVDTHIHFI…LPLAQRYFLF (438 aa)). 3 residues coordinate Ni(2+): His-134, His-136, and Lys-217. Lys-217 bears the N6-carboxylysine mark. Residue His-219 participates in substrate binding. Ni(2+) contacts are provided by His-246 and His-272. His-320 serves as the catalytic Proton donor. Asp-360 lines the Ni(2+) pocket.

Belongs to the metallo-dependent hydrolases superfamily. Urease alpha subunit family. Heterotrimer of UreA (gamma), UreB (beta) and UreC (alpha) subunits. Three heterotrimers associate to form the active enzyme. Ni cation is required as a cofactor. Carboxylation allows a single lysine to coordinate two nickel ions.

Its subcellular location is the cytoplasm. The catalysed reaction is urea + 2 H2O + H(+) = hydrogencarbonate + 2 NH4(+). Its pathway is nitrogen metabolism; urea degradation; CO(2) and NH(3) from urea (urease route): step 1/1. This is Urease subunit alpha from Janthinobacterium sp. (strain Marseille) (Minibacterium massiliensis).